The following is a 335-amino-acid chain: Probable nicotianamine synthase 3 (335 aa).

The protein belongs to the nicotianamine synthase (NAS)-like family.

It catalyses the reaction 3 S-adenosyl-L-methionine = nicotianamine + 3 S-methyl-5'-thioadenosine + 3 H(+). In terms of biological role, synthesizes nicotianamine, a polyamine that is the first intermediate in the synthesis of the phytosiderophores of the mugineic acid type found in gramineae which serves as a sensor for the physiological iron status within the plant, and/or might be involved in the transport of iron. This Hordeum vulgare (Barley) protein is Probable nicotianamine synthase 3 (NAS3).